The sequence spans 186 residues: Peptidyl-tRNA hydrolase (186 aa).

A tRNA-binding site is contributed by Y14. H19 functions as the Proton acceptor in the catalytic mechanism. TRNA is bound by residues Y61, N63, and N107.

It belongs to the PTH family. As to quaternary structure, monomer.

It localises to the cytoplasm. The catalysed reaction is an N-acyl-L-alpha-aminoacyl-tRNA + H2O = an N-acyl-L-amino acid + a tRNA + H(+). Functionally, hydrolyzes ribosome-free peptidyl-tRNAs (with 1 or more amino acids incorporated), which drop off the ribosome during protein synthesis, or as a result of ribosome stalling. Catalyzes the release of premature peptidyl moieties from peptidyl-tRNA molecules trapped in stalled 50S ribosomal subunits, and thus maintains levels of free tRNAs and 50S ribosomes. The protein is Peptidyl-tRNA hydrolase of Helicobacter pylori (strain Shi470).